Reading from the N-terminus, the 46-residue chain is Defensin Tk-AMP-D6.1 (46 aa).

4 disulfide bridges follow: C3-C46, C14-C34, C20-C40, and C24-C42.

In terms of biological role, plant defense peptide. This is Defensin Tk-AMP-D6.1 from Triticum kiharae (Wheat).